A 208-amino-acid polypeptide reads, in one-letter code: Claudin-like protein ZF-A89 (208 aa).

4 helical membrane-spanning segments follow: residues 8 to 28 (LLATVLAIIGWLGEIVICALP), 82 to 102 (ALVVISIIVTFMGVFLTIAGG), 117 to 137 (VVVAAGVFFLVGGILCLIPVC), and 160 to 180 (LGASLFIGWCASGLLLLGGAL).

This sequence belongs to the claudin family.

The protein localises to the cell membrane. The protein resides in the cell junction. Its subcellular location is the tight junction. In terms of biological role, component of tight junction (TJ) strands. The sequence is that of Claudin-like protein ZF-A89 (cldnd) from Danio rerio (Zebrafish).